The sequence spans 96 residues: Co-chaperonin GroES (96 aa).

Belongs to the GroES chaperonin family. Heptamer of 7 subunits arranged in a ring. Interacts with the chaperonin GroEL.

Its subcellular location is the cytoplasm. Functionally, together with the chaperonin GroEL, plays an essential role in assisting protein folding. The GroEL-GroES system forms a nano-cage that allows encapsulation of the non-native substrate proteins and provides a physical environment optimized to promote and accelerate protein folding. GroES binds to the apical surface of the GroEL ring, thereby capping the opening of the GroEL channel. The protein is Co-chaperonin GroES of Delftia acidovorans (strain DSM 14801 / SPH-1).